A 669-amino-acid chain; its full sequence is Dynamin-related protein 4C (669 aa).

Residues 1-21 form a disordered region; that stretch reads MVKKKVATKKNSPSLAIAKKK. The region spanning 62-323 is the Dynamin-type G domain; the sequence is GIHLPTIVVV…QSSMIARCLP (262 aa). Residues 72–79 form a G1 motif region; the sequence is GDQSSGKS. Residue 72 to 79 coordinates GTP; sequence GDQSSGKS. The segment at 97–99 is G2 motif; that stretch reads CTR. Positions 171–174 are G3 motif; sequence DLPG. GTP is bound by residues 171-175 and 240-243; these read DLPGI and TKAD. Residues 240–243 are G4 motif; the sequence is TKAD. Position 273 (Glu273) is a region of interest, G5 motif. Positions 575-669 constitute a GED domain; it reads AFDMKMRITS…AVAAIVDQNC (95 aa).

Belongs to the TRAFAC class dynamin-like GTPase superfamily. Dynamin/Fzo/YdjA family.

The protein resides in the cytoplasm. It is found in the cytoskeleton. Functionally, putative microtubule-associated force-producing protein, able to bind and hydrolyze GTP. The protein is Dynamin-related protein 4C (DRP4C) of Arabidopsis thaliana (Mouse-ear cress).